We begin with the raw amino-acid sequence, 163 residues long: uncharacterized protein (163 aa).

The chain crosses the membrane as a helical span at residues 7-23 (TLVAFIATFFNLAATSI).

The protein localises to the membrane. This is an uncharacterized protein from Saccharomyces cerevisiae (strain ATCC 204508 / S288c) (Baker's yeast).